We begin with the raw amino-acid sequence, 227 residues long: PKHD-type hydroxylase Mfla_2317 (227 aa).

The region spanning 78 to 178 is the Fe2OG dioxygenase domain; that stretch reads KVFPPLFNRY…RVSSFFWMQS (101 aa). Fe cation contacts are provided by His96, Asp98, and His159. Arg169 is a binding site for 2-oxoglutarate.

Fe(2+) serves as cofactor. Requires L-ascorbate as cofactor.

This is PKHD-type hydroxylase Mfla_2317 from Methylobacillus flagellatus (strain ATCC 51484 / DSM 6875 / VKM B-1610 / KT).